A 284-amino-acid chain; its full sequence is 3-methyl-2-oxobutanoate hydroxymethyltransferase 2 (284 aa).

Positions 49 and 88 each coordinate Mg(2+). 3-methyl-2-oxobutanoate is bound by residues 49 to 50, Asp88, and Lys118; that span reads DS. Glu120 contacts Mg(2+). Glu187 (proton acceptor) is an active-site residue.

This sequence belongs to the PanB family. Homodecamer; pentamer of dimers. It depends on Mg(2+) as a cofactor.

It localises to the cytoplasm. The enzyme catalyses 3-methyl-2-oxobutanoate + (6R)-5,10-methylene-5,6,7,8-tetrahydrofolate + H2O = 2-dehydropantoate + (6S)-5,6,7,8-tetrahydrofolate. Its pathway is cofactor biosynthesis; (R)-pantothenate biosynthesis; (R)-pantoate from 3-methyl-2-oxobutanoate: step 1/2. Its function is as follows. Catalyzes the reversible reaction in which hydroxymethyl group from 5,10-methylenetetrahydrofolate is transferred onto alpha-ketoisovalerate to form ketopantoate. The sequence is that of 3-methyl-2-oxobutanoate hydroxymethyltransferase 2 from Burkholderia ambifaria (strain ATCC BAA-244 / DSM 16087 / CCUG 44356 / LMG 19182 / AMMD) (Burkholderia cepacia (strain AMMD)).